A 187-amino-acid chain; its full sequence is Fibroblast growth factor 4A (187 aa).

Residues 1–22 form the signal peptide; the sequence is MTVPSALVPILLLGTAAVMVQC.

This sequence belongs to the heparin-binding growth factors family.

It is found in the secreted. Its function is as follows. Plays an important role in the regulation of embryonic development, cell proliferation, and cell differentiation. Good candidate for an inducing factor with possible roles both in mesoderm induction at the blastula stage and in the formation of the anteroposterior axis at the gastrula stage. The polypeptide is Fibroblast growth factor 4A (fgf4-a) (Xenopus laevis (African clawed frog)).